The sequence spans 149 residues: Large ribosomal subunit protein bL9 (149 aa).

It belongs to the bacterial ribosomal protein bL9 family.

Binds to the 23S rRNA. This Stenotrophomonas maltophilia (strain K279a) protein is Large ribosomal subunit protein bL9.